We begin with the raw amino-acid sequence, 803 residues long: Zinc finger and BTB domain-containing protein 17 (803 aa).

Residues 1–104 form the BTB domain; the sequence is MDFPQHSQHV…VATFLQMQDI (104 aa). The interval 116 to 295 is disordered; that stretch reads EPATSPGGNA…GLRSGTYGDR (180 aa). A Phosphoserine modification is found at Ser120. Positions 132–142 are enriched in basic and acidic residues; that stretch reads GGDKRAKEEKV. Composition is skewed to low complexity over residues 171–180 and 206–217; these read GQAQSAASGA and AAAEAEAALSES. Composition is skewed to acidic residues over residues 233–244 and 261–272; these read EQKEQEEQEEEG and EAPEENENEESA. The interval 269–308 is interaction with MYC; the sequence is EESAGTDSGQELGSEARGLRSGTYGDRTESKAYGSVIHKC. C2H2-type zinc fingers lie at residues 306 to 328, 334 to 356, 362 to 384, 390 to 412, 418 to 440, 446 to 468, 474 to 496, 502 to 524, 530 to 552, 558 to 580, 586 to 608, 614 to 637, and 717 to 739; these read HKCEDCGKEFTHTGNFKRHIRIH, FSCRECSKAFSDPAACKAHEKTH, YGCEECGKSYRLISLLNLHKKRH, YRCEDCGKLFTTSGNLKRHQLVH, YQCDYCGRSFSDPTSKMRHLETH, HKCPHCDKKFNQVGNLKAHLKIH, LKCRECGKQFTTSGNLKRHLRIH, YVCIHCQRQFADPGALQRHVRIH, CQCVMCGKAFTQASSLIAHVRQH, YVCERCGKRFVQSSQLANHIRHH, HKCSVCSKAFVNVGDLSKHIIIH, YLCDKCGRGFNRVDNLRSHVKTVH, and YACDSCGDKFLDANSLAQHVRIH. Lys397 is covalently cross-linked (Glycyl lysine isopeptide (Lys-Gly) (interchain with G-Cter in ubiquitin)). Lys481 participates in a covalent cross-link: Glycyl lysine isopeptide (Lys-Gly) (interchain with G-Cter in ubiquitin). Positions 637–718 are interaction with MYC; sequence HQGKAGIKIL…EDPNTHILYA (82 aa). Residues 637-803 are interaction with HCFC1; sequence HQGKAGIKIL…TAPECPPPAE (167 aa). The segment at 779–803 is disordered; it reads RDGAEGQPALAETSPTAPECPPPAE.

Belongs to the krueppel C2H2-type zinc-finger protein family. Homooligomerizes (via the BTB/POZ domain), multimerization is required for DNA binding. Interacts (via the C-terminal zinc fingers) with GIF1; the interaction results in the recruitment of MYB to the CDKN1A/p21 and CDKN1B promoters and repression of transcription. Interacts with TRAF2, interfering with the binding of UBC13 to TRAF2, and inhibiting TRAF2 E3 ligase activity. Interacts with MYC (via the C-terminal helix-loop-helix motif); the interaction inhibits ZBTB17 transactivation and growth arrest activities and renders it insoluble in the nucleus. Also interacts with HCFC1, MAGEA4 and TMPRSS11A. Interacts with BCL6; the interaction inhibits ZBTB17 transactivation activity on target genes involved in cell cycle arrest. Interacts with ZBTB49 isoform 3/ZNF509S1; this interaction blocks ZBTB17-mediated repression of RB1. In terms of processing, undergoes 'Lys-48'-linked polyubiquitination at Lys-397 and Lys-481 and subsequent proteasomal degradation in a TRAF2-dependent manner. In terms of tissue distribution, expressed in germinal center B-cells.

It is found in the nucleus. Its function is as follows. Transcription factor that can function as an activator or repressor depending on its binding partners, and by targeting negative regulators of cell cycle progression. Plays a critical role in early lymphocyte development, where it is essential to prevent apoptosis in lymphoid precursors, allowing them to survive in response to IL7 and undergo proper lineage commitment. Has been shown to bind to the promoters of adenovirus major late protein and cyclin D1 and activate transcription. Required for early embryonic development during gastrulation. Represses RB1 transcription; this repression can be blocked by interaction with ZBTB49 isoform 3/ZNF509S1. The chain is Zinc finger and BTB domain-containing protein 17 (ZBTB17) from Homo sapiens (Human).